Consider the following 361-residue polypeptide: Chitin synthase export chaperone (361 aa).

The next 7 helical transmembrane spans lie at 48–68 (IIFQPATCILHIAALVMATIM), 86–106 (LFFYMYIWVELFAIFLDSAII), 119–139 (IYAGSVGALYWCLLLNGFVGF), 150–170 (LWFLRISSLVVGAVCFGIPVA), 184–204 (TVGLFITYLVFPCVCVLIYFI), 218–238 (WVIGDLLFMAGFYIAGVLLLV), and 250–270 (HYVDGVFFSTLAFLFAVMMVY).

Belongs to the CHS7 family. As to quaternary structure, interacts with CHS3.

The protein resides in the endoplasmic reticulum membrane. In terms of biological role, chaperone required for the export of the chitin synthase CHS3 from the endoplasmic reticulum. This Cryptococcus neoformans var. neoformans serotype D (strain JEC21 / ATCC MYA-565) (Filobasidiella neoformans) protein is Chitin synthase export chaperone (CHS7).